The primary structure comprises 635 residues: DNA topoisomerase 4 subunit B (635 aa).

Residues Y5, N45, D72, 113–119 (GLHGVGA), and K340 each bind ATP. Positions 422–537 (RELFVVEGDS…KGHIYLALPP (116 aa)) constitute a Toprim domain. Mg(2+)-binding residues include E428, D502, and D504.

Belongs to the type II topoisomerase family. ParE type 2 subfamily. As to quaternary structure, heterotetramer composed of ParC and ParE. Mg(2+) is required as a cofactor. Mn(2+) serves as cofactor. The cofactor is Ca(2+).

The enzyme catalyses ATP-dependent breakage, passage and rejoining of double-stranded DNA.. Functionally, topoisomerase IV is essential for chromosome segregation. It relaxes supercoiled DNA. Performs the decatenation events required during the replication of a circular DNA molecule. This is DNA topoisomerase 4 subunit B from Mycoplasma pneumoniae (strain ATCC 29342 / M129 / Subtype 1) (Mycoplasmoides pneumoniae).